Reading from the N-terminus, the 600-residue chain is UDP-sugar pyrophospharylase (600 aa).

Belongs to the USP family. Mg(2+) serves as cofactor. The cofactor is Mn(2+). Post-translationally, the N-terminus is blocked.

The enzyme catalyses a monosaccharide 1-phosphate + UTP + H(+) = a UDP-monosaccharide + diphosphate. With respect to regulation, inhibited by a high concentration of pyrophosphate. In terms of biological role, may function as the terminal enzyme of the myo-inositol oxidation (MIO) pathway. May also play a role in the salvage pathway for synthesis of nucleotide sugars. In Pisum sativum (Garden pea), this protein is UDP-sugar pyrophospharylase (USP).